The sequence spans 74 residues: Protein krueppel (74 aa).

4 consecutive C2H2-type zinc fingers follow at residues 1–4, 10–32, 38–60, and 66–74; these read ERTH, FECQECHKRFTRDHHLKTHMRLH, YRCEHCDRQFVQVANLRRHLRVH, and YGCEHCSMK.

It belongs to the krueppel C2H2-type zinc-finger protein family.

Its subcellular location is the nucleus. In terms of biological role, krueppel is a gap class segmentation protein. This chain is Protein krueppel (Kr), found in Tribolium castaneum (Red flour beetle).